We begin with the raw amino-acid sequence, 267 residues long: MMLNTYKSYTERAEQHPNACARSLFELMERKKTNLSVAVDVTTKKELLSIADSVGPYVCVLKTHIDIVEDFDKDLVAQLEALAKKHDFLIFEDRKFADIGNTVKHQYEKGVYKIASWSHITNAHTVPGEGIIKGLGEVGLPLGRGLLLLAEMSSKGALTKGSYTTESVEMARRNKDFVFGFIAQHKMNEYPDEDFVVMTPGVGLDIKGDGLGQQYRTPHEVIVESGCDVIIVGRGIYGKPDEVEAQSKRYREAGWNAYLERVRMHKA.

Substrate is bound by residues Asp40, 62-64 (KTH), 93-102 (DRKFADIGNT), Tyr215, and Arg234. Lys95 serves as the catalytic Proton donor.

This sequence belongs to the OMP decarboxylase family.

It carries out the reaction orotidine 5'-phosphate + H(+) = UMP + CO2. Its pathway is pyrimidine metabolism; UMP biosynthesis via de novo pathway; UMP from orotate: step 2/2. The chain is Orotidine 5'-phosphate decarboxylase (pyrG) from Phycomyces blakesleeanus (strain ATCC 8743b / DSM 1359 / FGSC 10004 / NBRC 33097 / NRRL 1555).